A 267-amino-acid chain; its full sequence is Cell division protein FtsQ (267 aa).

Over 1 to 32 (MRKKTSSNKKNTAKKNNNISLHRKLGLIYKKT) the chain is Cytoplasmic. A helical transmembrane segment spans residues 33 to 53 (ILILKIVLIIFICLFAFTKYF). The Periplasmic segment spans residues 54–267 (ASLKSYLKTN…DKNKYYIEKY (214 aa)). Residues 73-141 (FKLENVIIEG…STIYIKLFER (69 aa)) enclose the POTRA domain.

This sequence belongs to the FtsQ/DivIB family. FtsQ subfamily.

It is found in the cell inner membrane. Functionally, essential cell division protein. The polypeptide is Cell division protein FtsQ (Rickettsia bellii (strain RML369-C)).